A 66-amino-acid polypeptide reads, in one-letter code: uncharacterized protein (66 aa).

This is an uncharacterized protein from Vertebrata (FPV).